Here is a 328-residue protein sequence, read N- to C-terminus: Urokinase plasminogen activator surface receptor (328 aa).

The N-terminal stretch at 1–24 (MGLLRRRLLLLVVVVTTCVPASQG) is a signal peptide. 3 consecutive UPAR/Ly6 domains span residues 25 to 118 (LRCI…GRYL), 118 to 213 (LECA…PPNG), and 214 to 299 (FQCY…RPTG). Intrachain disulfides connect C27-C48, C30-C36, and C41-C69. The N-linked (GlcNAc...) asparagine glycan is linked to N76. Intrachain disulfides connect C95/C100, C120/C147, C123/C130, C140/C169, C175/C192, C193/C198, C216/C244, C219/C227, C237/C263, C269/C288, and C289/C294. N-linked (GlcNAc...) asparagine glycans are attached at residues N184, N194, N222, N255, N283, and N290. Residue G299 is the site of GPI-anchor amidated glycine attachment. A propeptide spans 300–328 (GAPGPGPAHLILIASLLLTLRLWGIPLWT) (removed in mature form).

In terms of assembly, monomer. Interacts (via the UPAR/Ly6 domains) with SRPX2. Interacts with MRC2. Interacts with SORL1 (via N-terminal ectodomain); this interaction decreases PLAUR internalization. The ternary complex composed of PLAUR-PLAU-SERPINE1 also interacts with SORL1. Interacts with CD82; this interaction prevents PLAUR from binding to its high affinity ligand PLAU.

Its subcellular location is the cell membrane. The protein resides in the secreted. Its function is as follows. Acts as a receptor for urokinase plasminogen activator. Plays a role in localizing and promoting plasmin formation. Mediates the proteolysis-independent signal transduction activation effects of U-PA. The sequence is that of Urokinase plasminogen activator surface receptor (Plaur) from Rattus norvegicus (Rat).